A 148-amino-acid chain; its full sequence is Transcriptional repressor NrdR (148 aa).

Residues 3–32 (CPKCSSEESKVVDSRQAEDAIRRRRVCESC) fold into a zinc finger. The ATP-cone domain maps to 47–137 (LLVIKKDDKR…VYRSFKDVSE (91 aa)).

This sequence belongs to the NrdR family. Zn(2+) is required as a cofactor.

Its function is as follows. Negatively regulates transcription of bacterial ribonucleotide reductase nrd genes and operons by binding to NrdR-boxes. This chain is Transcriptional repressor NrdR, found in Lactococcus lactis subsp. lactis (strain IL1403) (Streptococcus lactis).